A 336-amino-acid polypeptide reads, in one-letter code: F420-dependent glucose-6-phosphate dehydrogenase (336 aa).

Aspartate 39 provides a ligand contact to coenzyme F420-(gamma-Glu)n. Histidine 40 functions as the Proton donor in the catalytic mechanism. Coenzyme F420-(gamma-Glu)n contacts are provided by residues threonine 76 and 107–108; that span reads TG. The active-site Proton acceptor is the glutamate 109. Residues asparagine 112, 177–178, and 180–181 each bind coenzyme F420-(gamma-Glu)n; these read GG and QV. Substrate contacts are provided by threonine 195, lysine 198, lysine 259, and arginine 283.

The protein belongs to the F420-dependent glucose-6-phosphate dehydrogenase family. As to quaternary structure, homodimer.

It carries out the reaction oxidized coenzyme F420-(gamma-L-Glu)(n) + D-glucose 6-phosphate + H(+) = 6-phospho-D-glucono-1,5-lactone + reduced coenzyme F420-(gamma-L-Glu)(n). Its function is as follows. Catalyzes the coenzyme F420-dependent oxidation of glucose 6-phosphate (G6P) to 6-phosphogluconolactone. Appears to have a role in resistance to oxidative stress, via its consumption of G6P that serves as a source of reducing power to combat oxidative stress in mycobacteria. The sequence is that of F420-dependent glucose-6-phosphate dehydrogenase from Mycolicibacterium gilvum (strain PYR-GCK) (Mycobacterium gilvum (strain PYR-GCK)).